The chain runs to 312 residues: D-alanine--D-alanine ligase (312 aa).

The 206-residue stretch at 99 to 304 folds into the ATP-grasp domain; that stretch reads KKILKAEGIP…FEDLVEKILM (206 aa). An ATP-binding site is contributed by 131-186; the sequence is LQTLKLPVVIKAPREGSTIGIEFVFSKQELPKAIKKVLEIDKQLLVEEFIEGVEVT. Residues aspartate 257, glutamate 271, and asparagine 273 each contribute to the Mg(2+) site.

Belongs to the D-alanine--D-alanine ligase family. Mg(2+) is required as a cofactor. It depends on Mn(2+) as a cofactor.

It localises to the cytoplasm. The catalysed reaction is 2 D-alanine + ATP = D-alanyl-D-alanine + ADP + phosphate + H(+). It participates in cell wall biogenesis; peptidoglycan biosynthesis. In terms of biological role, cell wall formation. In Carboxydothermus hydrogenoformans (strain ATCC BAA-161 / DSM 6008 / Z-2901), this protein is D-alanine--D-alanine ligase.